Consider the following 154-residue polypeptide: Xanthine-guanine phosphoribosyltransferase (154 aa).

5-phospho-alpha-D-ribose 1-diphosphate is bound by residues arginine 37–glycine 38, arginine 69, and glutamate 88–threonine 96. Arginine 69 is a binding site for GMP. Aspartate 89 provides a ligand contact to Mg(2+). Guanine is bound by residues aspartate 92 and isoleucine 135. 2 residues coordinate xanthine: aspartate 92 and isoleucine 135. GMP-binding positions include aspartate 92–threonine 96 and tryptophan 134–isoleucine 135.

The protein belongs to the purine/pyrimidine phosphoribosyltransferase family. XGPT subfamily. Homotetramer. It depends on Mg(2+) as a cofactor.

Its subcellular location is the cell inner membrane. The enzyme catalyses GMP + diphosphate = guanine + 5-phospho-alpha-D-ribose 1-diphosphate. It catalyses the reaction XMP + diphosphate = xanthine + 5-phospho-alpha-D-ribose 1-diphosphate. The catalysed reaction is IMP + diphosphate = hypoxanthine + 5-phospho-alpha-D-ribose 1-diphosphate. Its pathway is purine metabolism; GMP biosynthesis via salvage pathway; GMP from guanine: step 1/1. The protein operates within purine metabolism; XMP biosynthesis via salvage pathway; XMP from xanthine: step 1/1. Purine salvage pathway enzyme that catalyzes the transfer of the ribosyl-5-phosphate group from 5-phospho-alpha-D-ribose 1-diphosphate (PRPP) to the N9 position of the 6-oxopurines guanine and xanthine to form the corresponding ribonucleotides GMP (guanosine 5'-monophosphate) and XMP (xanthosine 5'-monophosphate), with the release of PPi. To a lesser extent, also acts on hypoxanthine. The polypeptide is Xanthine-guanine phosphoribosyltransferase (Vibrio parahaemolyticus serotype O3:K6 (strain RIMD 2210633)).